We begin with the raw amino-acid sequence, 251 residues long: Capsid protein (251 aa).

The segment at 1–29 (MPKRDAPWRSMAGTSKVSRNANYSPRSGI) is disordered. A Bipartite nuclear localization signal motif is present at residues 3–20 (KRDAPWRSMAGTSKVSRN). The segment covering 12-25 (AGTSKVSRNANYSP) has biased composition (polar residues). Positions 35–49 (KAAEWVNRPMYRKPR) match the Nuclear localization signal motif. Residues 63–80 (CEGPCKVQSFEQRHDILH) fold into a zinc finger. The short motif at 96–117 (ITHRVGKRFCVKSVYILGKIWM) is the Nuclear export signal element. Positions 195-242 (RRFWKVNNHVVYNHQEAGKYENHTENALLLYMACTHASNPVYATLKIR) match the Bipartite nuclear localization signal motif.

Belongs to the geminiviridae capsid protein family. As to quaternary structure, homomultimer. Binds to single-stranded and double-stranded viral DNA. Interacts (via nuclear localization signals) with host importin alpha-1a.

It localises to the virion. It is found in the host nucleus. Functionally, encapsidates the viral DNA into characteristic twinned ('geminate') particles. Binds the genomic viral ssDNA and shuttles it into and out of the cell nucleus. The CP of bipartite geminiviruses is not required for cell-to-cell or systemic movement. The protein is Capsid protein of Solanum tuberosum (Potato).